The chain runs to 333 residues: Nucleoid-associated protein YE1421 (333 aa).

The protein belongs to the YejK family.

It is found in the cytoplasm. It localises to the nucleoid. In Yersinia enterocolitica serotype O:8 / biotype 1B (strain NCTC 13174 / 8081), this protein is Nucleoid-associated protein YE1421.